We begin with the raw amino-acid sequence, 91 residues long: Large ribosomal subunit protein bL27 (91 aa).

The protein belongs to the bacterial ribosomal protein bL27 family.

In Pseudomonas savastanoi pv. phaseolicola (strain 1448A / Race 6) (Pseudomonas syringae pv. phaseolicola (strain 1448A / Race 6)), this protein is Large ribosomal subunit protein bL27.